The following is a 74-amino-acid chain: MNKYLFDHKIWSTPYYFYCEEDCHRLFLSFIEGRTFEKPTSNAEENVQETEAGESFTLNPGEDFQNCFPRQRIL.

The protein belongs to the DUP/COS family.

The protein localises to the cytoplasm. It is found in the membrane. The protein is DUP240 protein DFP2 of Saccharomyces cerevisiae (strain ATCC 204508 / S288c) (Baker's yeast).